The chain runs to 265 residues: Polyphosphate glucokinase (265 aa).

Positions 1-18 (MTSTGPETSETPGATTQR) are enriched in polar residues. Residues 1–22 (MTSTGPETSETPGATTQRHGFG) are disordered. 24–29 (DVGGSG) contributes to the ATP binding site.

Belongs to the ROK (NagC/XylR) family. As to quaternary structure, homodimer.

It carries out the reaction [phosphate](n) + D-glucose = [phosphate](n-1) + D-glucose 6-phosphate + H(+). It catalyses the reaction D-glucose + ATP = D-glucose 6-phosphate + ADP + H(+). In terms of biological role, catalyzes the phosphorylation of glucose using polyphosphate or ATP as the phosphoryl donor. Polyphosphate, rather than ATP, seems to be the major phosphate donor for the enzyme in M.tuberculosis. GTP, UTP and CTP can replace ATP as phosphoryl donor. The chain is Polyphosphate glucokinase (ppgK) from Mycobacterium tuberculosis (strain ATCC 25177 / H37Ra).